The following is a 129-amino-acid chain: Small ribosomal subunit protein uS11 (129 aa).

Belongs to the universal ribosomal protein uS11 family. In terms of assembly, part of the 30S ribosomal subunit. Interacts with proteins S7 and S18. Binds to IF-3.

Its function is as follows. Located on the platform of the 30S subunit, it bridges several disparate RNA helices of the 16S rRNA. Forms part of the Shine-Dalgarno cleft in the 70S ribosome. This is Small ribosomal subunit protein uS11 from Listeria innocua serovar 6a (strain ATCC BAA-680 / CLIP 11262).